A 494-amino-acid chain; its full sequence is Fumigaclavine B O-acetyltransferase easN (494 aa).

It belongs to the fumigaclavine B O-acetyltransferase family. In terms of assembly, monomer.

The enzyme catalyses fumigaclavine B + acetyl-CoA = fumigaclavine A + CoA. It participates in alkaloid biosynthesis; ergot alkaloid biosynthesis. Its function is as follows. Fumigaclavine B O-acetyltransferase; part of the gene cluster that mediates the biosynthesis of fumiclavanine C, a fungal ergot alkaloid. DmaW catalyzes the first step of ergot alkaloid biosynthesis by condensing dimethylallyl diphosphate (DMAP) and tryptophan to form 4-dimethylallyl-L-tryptophan. The second step is catalyzed by the methyltransferase easF that methylates 4-dimethylallyl-L-tryptophan in the presence of S-adenosyl-L-methionine, resulting in the formation of 4-dimethylallyl-L-abrine. The catalase easC and the FAD-dependent oxidoreductase easE then transform 4-dimethylallyl-L-abrine to chanoclavine-I which is further oxidized by EasD in the presence of NAD(+), resulting in the formation of chanoclavine-I aldehyde. EasA reduces chanoclavine-I aldehyde to dihydrochanoclavine-I aldehyde that spontaneously dehydrates to form 6,8-dimethyl-6,7-didehydroergoline. EasG then catalyzes the reduction of 6,8-dimethyl-6,7-didehydroergoline to form festuclavine. Hydrolysis of festuclavine by easM then leads to the formation of fumigaclavine B which is in turn acetylated by easN to fumigaclavine A. Finally, easL catalyzes the conversion of fumigaclavine A into fumigaclavine C by attaching a dimethylallyl moiety to C-2 of the indole nucleus. The chain is Fumigaclavine B O-acetyltransferase easN from Aspergillus fumigatus (strain ATCC MYA-4609 / CBS 101355 / FGSC A1100 / Af293) (Neosartorya fumigata).